The following is a 393-amino-acid chain: Xylose transport system permease protein XylH (393 aa).

Topologically, residues 1–24 (MSKSNPSEVKLAVPTSGGFSGLKS) are periplasmic. A helical transmembrane segment spans residues 25–45 (LNLQVFVMIAAIIAIMLFFTW). Over 46-64 (TTDGAYLSARNVSNLLRQT) the chain is Cytoplasmic. A helical membrane pass occupies residues 65 to 85 (AITGILAVGMVFVIISAEIDL). Over 86–102 (SVGSMMGLLGGVAAICD) the chain is Periplasmic. The chain crosses the membrane as a helical span at residues 103 to 123 (VWLGWPLPLTIIVTLVLGLLL). The Cytoplasmic portion of the chain corresponds to 124-135 (GAWNGWWVAYRK). A helical transmembrane segment spans residues 136–156 (VPSFIVTLAGMLAFRGILIGI). The Periplasmic portion of the chain corresponds to 157-175 (TNGTTVSPTSAAMSQIGQS). A helical membrane pass occupies residues 176–196 (YLPASTGFIIGALGLMAFVGW). Residues 197 to 214 (QWRGRMRRQALGLQSPAS) lie on the Cytoplasmic side of the membrane. The helical transmembrane segment at 215–235 (TAVVGRQALTAIIVLGAIWLL) threads the bilayer. The Periplasmic portion of the chain corresponds to 236–239 (NDYR). A helical membrane pass occupies residues 240 to 260 (GVPTPVLLLTLLLLGGMFMAT). Topologically, residues 261-287 (RTAFGRRIYAIGGNLEAARLSGINVER) are cytoplasmic. A helical transmembrane segment spans residues 288-308 (TKLAVFAINGLMVAIAGLILS). The Periplasmic portion of the chain corresponds to 309 to 312 (SRLG). Residues 313–333 (AGSPSAGNIAELDAIAACVIG) form a helical membrane-spanning segment. At 334–336 (GTS) the chain is on the cytoplasmic side. A helical transmembrane segment spans residues 337–357 (LAGGVGSVAGAVMGAFIMASL). Topologically, residues 358-365 (DNGMSMMD) are periplasmic. The helical transmembrane segment at 366–386 (VPTFWQYIVKGAILLLAVWMD) threads the bilayer. Topologically, residues 387-393 (SATKRRS) are cytoplasmic.

Belongs to the binding-protein-dependent transport system permease family. AraH/RbsC subfamily.

It is found in the cell inner membrane. Its function is as follows. Part of the binding-protein-dependent transport system for D-xylose. Probably responsible for the translocation of the substrate across the membrane. In Escherichia coli O6:H1 (strain CFT073 / ATCC 700928 / UPEC), this protein is Xylose transport system permease protein XylH (xylH).